Consider the following 214-residue polypeptide: MRAELAVYFIAGTQDIVRGTLPSVLEEALKGGITCFQYREKGAGSLQTASERKEMALECQKLCAKYQVPFIINDDVALALEIGADGIHVGQTDEAIRQVIASCSGKMKIGLSVHSVSEAKEAERLGAVDYIGVGPIFPTISKADAEPVSGTAILEEIRRAGITIPIVGIGGINETNSAEVLTAGADGVSVISAITQSDDCHSVIKQLKNPGSPS.

4-amino-2-methyl-5-(diphosphooxymethyl)pyrimidine is bound by residues 37-41 and N73; that span reads QYREK. 2 residues coordinate Mg(2+): D74 and D93. S112 is a 4-amino-2-methyl-5-(diphosphooxymethyl)pyrimidine binding site. 139–141 contacts 2-[(2R,5Z)-2-carboxy-4-methylthiazol-5(2H)-ylidene]ethyl phosphate; that stretch reads TIS. Position 142 (K142) interacts with 4-amino-2-methyl-5-(diphosphooxymethyl)pyrimidine. 2-[(2R,5Z)-2-carboxy-4-methylthiazol-5(2H)-ylidene]ethyl phosphate is bound by residues G171 and 191 to 192; that span reads IS.

Belongs to the thiamine-phosphate synthase family. It depends on Mg(2+) as a cofactor.

It catalyses the reaction 2-[(2R,5Z)-2-carboxy-4-methylthiazol-5(2H)-ylidene]ethyl phosphate + 4-amino-2-methyl-5-(diphosphooxymethyl)pyrimidine + 2 H(+) = thiamine phosphate + CO2 + diphosphate. The enzyme catalyses 2-(2-carboxy-4-methylthiazol-5-yl)ethyl phosphate + 4-amino-2-methyl-5-(diphosphooxymethyl)pyrimidine + 2 H(+) = thiamine phosphate + CO2 + diphosphate. It carries out the reaction 4-methyl-5-(2-phosphooxyethyl)-thiazole + 4-amino-2-methyl-5-(diphosphooxymethyl)pyrimidine + H(+) = thiamine phosphate + diphosphate. It participates in cofactor biosynthesis; thiamine diphosphate biosynthesis; thiamine phosphate from 4-amino-2-methyl-5-diphosphomethylpyrimidine and 4-methyl-5-(2-phosphoethyl)-thiazole: step 1/1. Its function is as follows. Condenses 4-methyl-5-(beta-hydroxyethyl)thiazole monophosphate (THZ-P) and 2-methyl-4-amino-5-hydroxymethyl pyrimidine pyrophosphate (HMP-PP) to form thiamine monophosphate (TMP). This is Thiamine-phosphate synthase from Listeria monocytogenes serovar 1/2a (strain ATCC BAA-679 / EGD-e).